Here is a 426-residue protein sequence, read N- to C-terminus: Probable imidazolonepropionase (426 aa).

Positions 159 and 192 each coordinate 4-imidazolone-5-propanoate. Y159 contributes to the N-formimidoyl-L-glutamate binding site. Residue H260 coordinates Fe(3+). Zn(2+) is bound at residue H260. Residue E263 coordinates 4-imidazolone-5-propanoate. Residue D334 coordinates Fe(3+). D334 is a Zn(2+) binding site. N336 contributes to the N-formimidoyl-L-glutamate binding site.

The protein belongs to the metallo-dependent hydrolases superfamily. HutI family. Requires Zn(2+) as cofactor. It depends on Fe(3+) as a cofactor.

The enzyme catalyses 4-imidazolone-5-propanoate + H2O = N-formimidoyl-L-glutamate. It participates in amino-acid degradation; L-histidine degradation into L-glutamate; N-formimidoyl-L-glutamate from L-histidine: step 3/3. The protein is Probable imidazolonepropionase (AMDHD1) of Homo sapiens (Human).